The following is a 280-amino-acid chain: 2,3,4,5-tetrahydropyridine-2,6-dicarboxylate N-succinyltransferase (280 aa).

It belongs to the transferase hexapeptide repeat family.

The protein localises to the cytoplasm. It catalyses the reaction (S)-2,3,4,5-tetrahydrodipicolinate + succinyl-CoA + H2O = (S)-2-succinylamino-6-oxoheptanedioate + CoA. It participates in amino-acid biosynthesis; L-lysine biosynthesis via DAP pathway; LL-2,6-diaminopimelate from (S)-tetrahydrodipicolinate (succinylase route): step 1/3. The sequence is that of 2,3,4,5-tetrahydropyridine-2,6-dicarboxylate N-succinyltransferase from Methylorubrum extorquens (strain PA1) (Methylobacterium extorquens).